Reading from the N-terminus, the 65-residue chain is MKMKMIVVISILLIVFSLSSKAMSLEDEQESVQREEDDLLGFSEEDLKAIKEHRAKNAGRFDPAV.

An N-terminal signal peptide occupies residues 1 to 24 (MKMKMIVVISILLIVFSLSSKAMS). The propeptide occupies 25 to 34 (LEDEQESVQR). Position 58 is an alanine amide (A58). Residues 59 to 65 (GRFDPAV) constitute a propeptide that is removed on maturation.

Expressed by the venom gland.

The protein resides in the secreted. Its function is as follows. Helical wheel projections predict no hydrophobic face, suggesting a non-amphipathic peptide. Does not show antifungal activity. The protein is Peptide ToAcP of Tityus obscurus (Amazonian scorpion).